We begin with the raw amino-acid sequence, 426 residues long: MALIDAIHAREILDSRGNPTVEVEVLLSDGQIGRAAVPSGASTGEHEAVELRDGDKGRYLGKGVQKAVDAVIDQIAPALTGFDATDQRSIDQAMLDLDGTPNKGKLGANAILGVSLAVANAAAASADLPLYKYLGGPNAHVLPVPLMNILNGGSHADSDVDIQEFMIAPIGAETFSEGLRWGVEVYHNLKSVLKEQGLSTGLGDEGGFAPNLPSNRAALDLIQEAIKNAGYTPGKDIALALDVASSEFFKDGAYQFEGKALSASEMSAYYAELVADYPLVSIEDPLDENDWEGWKTLTDAIGDKVQLVGDDLFVTNPAILQRGIDTRTANSLLVKVNQIGSLTETLDAVSLAQRAGYTTITSHRSGETEDTTIADISVATNAGQIKTGAPARSERVAKYNQLLRIEEELDDAARYAGRSAFPRFKG.

Residue glutamine 163 coordinates (2R)-2-phosphoglycerate. The active-site Proton donor is glutamate 205. Mg(2+) is bound by residues aspartate 242, glutamate 283, and aspartate 310. (2R)-2-phosphoglycerate-binding residues include lysine 335, arginine 364, serine 365, and lysine 386. Lysine 335 (proton acceptor) is an active-site residue.

Belongs to the enolase family. Mg(2+) is required as a cofactor.

Its subcellular location is the cytoplasm. It is found in the secreted. It localises to the cell surface. It catalyses the reaction (2R)-2-phosphoglycerate = phosphoenolpyruvate + H2O. It functions in the pathway carbohydrate degradation; glycolysis; pyruvate from D-glyceraldehyde 3-phosphate: step 4/5. Catalyzes the reversible conversion of 2-phosphoglycerate (2-PG) into phosphoenolpyruvate (PEP). It is essential for the degradation of carbohydrates via glycolysis. The sequence is that of Enolase from Pseudarthrobacter chlorophenolicus (strain ATCC 700700 / DSM 12829 / CIP 107037 / JCM 12360 / KCTC 9906 / NCIMB 13794 / A6) (Arthrobacter chlorophenolicus).